The sequence spans 349 residues: tRNA-specific 2-thiouridylase MnmA (349 aa).

Residues 6-13 and Met32 each bind ATP; that span reads LLSGGVDS. Catalysis depends on Cys103, which acts as the Nucleophile. The cysteines at positions 103 and 195 are disulfide-linked. Gly127 contacts ATP. The segment at 145–147 is interaction with tRNA; the sequence is KDQ. Residue Cys195 is the Cysteine persulfide intermediate of the active site.

This sequence belongs to the MnmA/TRMU family.

The protein localises to the cytoplasm. The enzyme catalyses S-sulfanyl-L-cysteinyl-[protein] + uridine(34) in tRNA + AH2 + ATP = 2-thiouridine(34) in tRNA + L-cysteinyl-[protein] + A + AMP + diphosphate + H(+). In terms of biological role, catalyzes the 2-thiolation of uridine at the wobble position (U34) of tRNA, leading to the formation of s(2)U34. The chain is tRNA-specific 2-thiouridylase MnmA from Pseudothermotoga lettingae (strain ATCC BAA-301 / DSM 14385 / NBRC 107922 / TMO) (Thermotoga lettingae).